A 150-amino-acid polypeptide reads, in one-letter code: Leukotriene C4 synthase (150 aa).

At M1 to A6 the chain is on the cytoplasmic side. The chain crosses the membrane as a helical span at residues L7–I27. The Lumenal segment spans residues S28–R48. Position 30 (R30) interacts with glutathione. Residue R31 is the Proton donor of the active site. At S36 the chain carries Phosphoserine. A helical transmembrane segment spans residues V49–V69. Glutathione is bound by residues R51 to N55 and E58 to Y59. At A70–F73 the chain is on the cytoplasmic side. A helical transmembrane segment spans residues F74 to F94. Y93 to Y97 is a binding site for glutathione. Residues Q95 to R104 lie on the Lumenal side of the membrane. Catalysis depends on R104, which acts as the Proton acceptor. The chain crosses the membrane as a helical span at residues L105–L124. The Cytoplasmic segment spans residues G125–A150.

It belongs to the MAPEG family. Homotrimer. Interacts with ALOX5AP and ALOX5. In terms of processing, phosphorylation at Ser-36 by RPS6KB1 inhibits the leukotriene-C4 synthase activity.

The protein localises to the nucleus outer membrane. Its subcellular location is the endoplasmic reticulum membrane. It localises to the nucleus membrane. The catalysed reaction is leukotriene C4 = leukotriene A4 + glutathione. It catalyses the reaction (13S,14S)-epoxy-(4Z,7Z,9E,11E,16Z,19Z)-docosahexaenoate + glutathione = (13R)-S-glutathionyl-(14S)-hydroxy-(4Z,7Z,9E,11E,16Z,19Z)-docosahexaenoate. The protein operates within lipid metabolism; leukotriene C4 biosynthesis. Its activity is regulated as follows. Inhibited by MK886. Functionally, catalyzes the conjugation of leukotriene A4 with reduced glutathione (GSH) to form leukotriene C4 with high specificity. Can also catalyze the transfer of a glutathionyl group from glutathione (GSH) to 13(S),14(S)-epoxy-docosahexaenoic acid to form maresin conjugate in tissue regeneration 1 (MCTR1), a bioactive lipid mediator that possess potent anti-inflammatory and proresolving actions. The sequence is that of Leukotriene C4 synthase (Ltc4s) from Rattus norvegicus (Rat).